A 602-amino-acid chain; its full sequence is Elongation factor 4 (602 aa).

Residues 2–184 (DHIRNFSIIA…AVIARMPPPK (183 aa)) enclose the tr-type G domain. Residues 14–19 (DHGKST) and 131–134 (NKMD) each bind GTP.

It belongs to the TRAFAC class translation factor GTPase superfamily. Classic translation factor GTPase family. LepA subfamily.

The protein resides in the cell inner membrane. It carries out the reaction GTP + H2O = GDP + phosphate + H(+). Functionally, required for accurate and efficient protein synthesis under certain stress conditions. May act as a fidelity factor of the translation reaction, by catalyzing a one-codon backward translocation of tRNAs on improperly translocated ribosomes. Back-translocation proceeds from a post-translocation (POST) complex to a pre-translocation (PRE) complex, thus giving elongation factor G a second chance to translocate the tRNAs correctly. Binds to ribosomes in a GTP-dependent manner. This is Elongation factor 4 from Leptothrix cholodnii (strain ATCC 51168 / LMG 8142 / SP-6) (Leptothrix discophora (strain SP-6)).